A 60-amino-acid polypeptide reads, in one-letter code: Large ribosomal subunit protein bL32 (60 aa).

Residues Met1 to Arg16 are compositionally biased toward basic residues. The disordered stretch occupies residues Met1–Ala60. Basic and acidic residues predominate over residues Arg17–Leu44.

This sequence belongs to the bacterial ribosomal protein bL32 family.

This chain is Large ribosomal subunit protein bL32, found in Bradyrhizobium sp. (strain BTAi1 / ATCC BAA-1182).